The sequence spans 110 residues: Insulin-2 (110 aa).

The first 24 residues, 1–24, serve as a signal peptide directing secretion; sequence MALWIRFLPLLALLILWEPRPAQA. 3 disulfide bridges follow: cysteine 31-cysteine 96, cysteine 43-cysteine 109, and cysteine 95-cysteine 100. A propeptide spans 57-87 (c peptide); the sequence is EVEDPQVAQLELGGGPGAGDLQTLALEVARQ.

It belongs to the insulin family. Heterodimer of a B chain and an A chain linked by two disulfide bonds.

It is found in the secreted. Its function is as follows. Insulin decreases blood glucose concentration. It increases cell permeability to monosaccharides, amino acids and fatty acids. It accelerates glycolysis, the pentose phosphate cycle, and glycogen synthesis in liver. This is Insulin-2 (Ins2) from Rattus norvegicus (Rat).